Consider the following 158-residue polypeptide: Dysbindin domain-containing protein 2 (158 aa).

The interval 79 to 158 is disordered; it reads FLPCEESSPA…DGGAEPGPCS (80 aa). The span at 106 to 131 shows a compositional bias: low complexity; the sequence is PTSDRTTSRTSSLSSDSSNLRSPNPS. A phosphoserine mark is found at serine 119 and serine 120. Threonine 137 is modified (phosphothreonine). Serine 142 carries the post-translational modification Phosphoserine. Residues 142 to 151 show a composition bias toward acidic residues; the sequence is SDEEDGDDGG.

Belongs to the dysbindin family. Monomer. Interacts with CSNK1D and CSNK1E.

Functionally, may modulate the activity of casein kinase-1. Inhibits CSNK1D autophosphorylation (in vitro). The polypeptide is Dysbindin domain-containing protein 2 (Dbndd2) (Mus musculus (Mouse)).